The primary structure comprises 273 residues: Cell division protein FtsQ (273 aa).

The Cytoplasmic segment spans residues 1-20; sequence MPPRKAHTTRRTPAKKSGVR. A helical membrane pass occupies residues 21–43; sequence RRLLRLLVTGVPVLALCGVAWLW. At 44 to 273 the chain is on the periplasmic side; it reads LESVRLTRIE…STQKSAMGHE (230 aa). The 69-residue stretch at 47-115 folds into the POTRA domain; that stretch reads VRLTRIEIVG…GTLRIAVEER (69 aa).

The protein belongs to the FtsQ/DivIB family. FtsQ subfamily.

It is found in the cell inner membrane. Its function is as follows. Essential cell division protein. This chain is Cell division protein FtsQ, found in Rhodothermus marinus (strain ATCC 43812 / DSM 4252 / R-10) (Rhodothermus obamensis).